Here is a 530-residue protein sequence, read N- to C-terminus: Chaperonin GroEL (530 aa).

Residues 30–33 (TLGP), lysine 51, 87–91 (DGTTT), glycine 415, and aspartate 495 contribute to the ATP site.

It belongs to the chaperonin (HSP60) family. In terms of assembly, forms a cylinder of 14 subunits composed of two heptameric rings stacked back-to-back. Interacts with the co-chaperonin GroES.

The protein localises to the cytoplasm. It catalyses the reaction ATP + H2O + a folded polypeptide = ADP + phosphate + an unfolded polypeptide.. Functionally, together with its co-chaperonin GroES, plays an essential role in assisting protein folding. The GroEL-GroES system forms a nano-cage that allows encapsulation of the non-native substrate proteins and provides a physical environment optimized to promote and accelerate protein folding. This is Chaperonin GroEL from Carsonella ruddii (strain PV).